Here is a 93-residue protein sequence, read N- to C-terminus: Alpha-defensin 24 (93 aa).

The signal sequence occupies residues 1–19; sequence MKTLILLSALVLLAFQVQA. Positions 20–58 are excised as a propeptide; that stretch reads DPIQNTDEETKTEEQPGEEDQAVSVSFGDPEGASLQEES. The interval 23-54 is disordered; it reads QNTDEETKTEEQPGEEDQAVSVSFGDPEGASL. Intrachain disulfides connect Cys-64/Cys-92, Cys-66/Cys-81, and Cys-71/Cys-91.

This sequence belongs to the alpha-defensin family.

The protein resides in the secreted. Its function is as follows. May have microbicidal activities. This Mus musculus (Mouse) protein is Alpha-defensin 24 (Defa24).